Reading from the N-terminus, the 339-residue chain is Zinc transporter 3 (339 aa).

Residues 1 to 25 form the signal peptide; it reads MKTKNVKLLFFFFSVSLLLIAVVNA. The Extracellular segment spans residues 26–54; the sequence is AEGHSHGGPKCECSHEDDHENKAGARKYK. The chain crosses the membrane as a helical span at residues 55–75; it reads IAAIPTVLIAGIIGVLFPLLG. Over 76 to 86 the chain is Cytoplasmic; that stretch reads KVFPSLRPETC. The helical transmembrane segment at 87–107 threads the bilayer; sequence FFFVTKAFAAGVILATGFMHV. The Extracellular segment spans residues 108–123; sequence LPEAYEMLNSPCLTSE. A helical membrane pass occupies residues 124 to 144; sequence AWEFPFTGFIAMIAAILTLSV. At 145 to 184 the chain is on the cytoplasmic side; that stretch reads DTFATSSFYKSHCKASKRVSDGETGESSVDSEKVQILRTR. The helical transmembrane segment at 185–205 threads the bilayer; the sequence is VIAQVLELGIIVHSVVIGISL. At 206 to 216 the chain is on the extracellular side; it reads GASQSPDAAKA. A helical transmembrane segment spans residues 217–237; it reads LFIALMFHQCFEGLGLGGCIA. Over 238–247 the chain is Cytoplasmic; that stretch reads QGKFKCLSVT. A helical transmembrane segment spans residues 248–268; sequence IMSTFFAITTPIGIVVGMGIA. Topologically, residues 269–278 are extracellular; sequence NSYDESSPTA. Residues 279 to 299 form a helical membrane-spanning segment; sequence LIVQGVLNAASAGILIYMSLV. The Cytoplasmic segment spans residues 300–315; the sequence is DLLAADFTHPKMQSNT. The chain crosses the membrane as a helical span at residues 316 to 336; the sequence is GLQIMAHIALLLGAGLMSLLA. Topologically, residues 337–339 are extracellular; that stretch reads KWA.

The protein belongs to the ZIP transporter (TC 2.A.5) family. Expressed predominantly in the roots of zinc-deficient plants.

It localises to the cell membrane. Mediates zinc uptake from the rhizosphere. May also transport other divalent cations. The protein is Zinc transporter 3 (ZIP3) of Arabidopsis thaliana (Mouse-ear cress).